The sequence spans 360 residues: Phosphoserine aminotransferase (360 aa).

Arginine 42 serves as a coordination point for L-glutamate. Pyridoxal 5'-phosphate-binding positions include 76–77, tryptophan 102, threonine 152, aspartate 172, and glutamine 195; that span reads AR. At lysine 196 the chain carries N6-(pyridoxal phosphate)lysine. Pyridoxal 5'-phosphate is bound at residue 237 to 238; that stretch reads NT.

It belongs to the class-V pyridoxal-phosphate-dependent aminotransferase family. SerC subfamily. Homodimer. It depends on pyridoxal 5'-phosphate as a cofactor.

The protein localises to the cytoplasm. It carries out the reaction O-phospho-L-serine + 2-oxoglutarate = 3-phosphooxypyruvate + L-glutamate. The catalysed reaction is 4-(phosphooxy)-L-threonine + 2-oxoglutarate = (R)-3-hydroxy-2-oxo-4-phosphooxybutanoate + L-glutamate. The protein operates within amino-acid biosynthesis; L-serine biosynthesis; L-serine from 3-phospho-D-glycerate: step 2/3. It functions in the pathway cofactor biosynthesis; pyridoxine 5'-phosphate biosynthesis; pyridoxine 5'-phosphate from D-erythrose 4-phosphate: step 3/5. In terms of biological role, catalyzes the reversible conversion of 3-phosphohydroxypyruvate to phosphoserine and of 3-hydroxy-2-oxo-4-phosphonooxybutanoate to phosphohydroxythreonine. The chain is Phosphoserine aminotransferase from Pasteurella multocida (strain Pm70).